The primary structure comprises 51 residues: MIICKTAHEITLMREAGKIVSATLEELKNHIRPGVTTKELDAIAEEVIRSH.

Belongs to the peptidase M24A family. Methionine aminopeptidase type 1 subfamily. As to quaternary structure, monomer. Co(2+) is required as a cofactor. The cofactor is Zn(2+). It depends on Mn(2+) as a cofactor. Requires Fe(2+) as cofactor.

The enzyme catalyses Release of N-terminal amino acids, preferentially methionine, from peptides and arylamides.. Functionally, removes the N-terminal methionine from nascent proteins. The N-terminal methionine is often cleaved when the second residue in the primary sequence is small and uncharged (Met-Ala-, Cys, Gly, Pro, Ser, Thr, or Val). Requires deformylation of the N(alpha)-formylated initiator methionine before it can be hydrolyzed. The protein is Methionine aminopeptidase (map) of Geobacillus stearothermophilus (Bacillus stearothermophilus).